The primary structure comprises 463 residues: Chromosomal replication initiator protein DnaA (463 aa).

The domain I, interacts with DnaA modulators stretch occupies residues 1-83 (MSTNQIILTD…LQLFQHYNNT (83 aa)). Residues 83–124 (TIKSIEIITKELPGITQTVIALPTKTFADIGSSELNAENIFS) form a domain II region. The domain III, AAA+ region stretch occupies residues 125–343 (TLDVRFTFDN…GALNKVIAHS (219 aa)). Gly171, Gly173, Lys174, and Thr175 together coordinate ATP. Residues 344–463 (NFTLKEITLE…INLLMKILQN (120 aa)) form a domain IV, binds dsDNA region.

Belongs to the DnaA family. As to quaternary structure, oligomerizes as a right-handed, spiral filament on DNA at oriC.

It localises to the cytoplasm. Plays an essential role in the initiation and regulation of chromosomal replication. ATP-DnaA binds to the origin of replication (oriC) to initiate formation of the DNA replication initiation complex once per cell cycle. Binds the DnaA box (a 9 base pair repeat at the origin) and separates the double-stranded (ds)DNA. Forms a right-handed helical filament on oriC DNA; dsDNA binds to the exterior of the filament while single-stranded (ss)DNA is stabiized in the filament's interior. The ATP-DnaA-oriC complex binds and stabilizes one strand of the AT-rich DNA unwinding element (DUE), permitting loading of DNA polymerase. After initiation quickly degrades to an ADP-DnaA complex that is not apt for DNA replication. Binds acidic phospholipids. In Rickettsia massiliae (strain Mtu5), this protein is Chromosomal replication initiator protein DnaA.